The sequence spans 1402 residues: Erbin (1402 aa).

LRR repeat units follow at residues 23–44 (TVTT…IFTF), 47–68 (TLEE…LFNC), 70–91 (SLHK…IANL), 93–114 (NLRE…IKNC), 116–137 (VLTI…FSQL), 139–161 (NLTQ…GRLT), 162–183 (KLQI…MNRL), 185–206 (QLER…LEQL), 208–229 (GLRE…IGSL), 231–252 (QLTY…ISTC), 254–275 (NLQD…IGSL), 277–298 (NVTT…IGGL), 300–321 (SIEE…IGQL), 323–344 (NMRT…IGNW), 346–367 (NITV…MGDM), 369–391 (KLKV…TKLQ), and 392–413 (QLTA…QKET). Serine 440 and serine 444 each carry phosphoserine. Disordered stretches follow at residues 465 to 489 (DEDK…PYPD) and 507 to 543 (DEET…TTKS). The segment covering 470–480 (EREAPPREGNL) has biased composition (basic and acidic residues). At tyrosine 483 the chain carries Phosphotyrosine. Threonine 485 is modified (phosphothreonine). Positions 507 to 534 (DEETNEESGRDLKQHEDQQVVNKDKCVK) are enriched in basic and acidic residues. Residues serine 595, serine 599, serine 600, and serine 617 each carry the phosphoserine modification. Residues 629–638 (NKKDDAKDAD) are compositionally biased toward basic and acidic residues. Residues 629–694 (NKKDDAKDAD…PVDSNSKVRQ (66 aa)) are disordered. The segment covering 647 to 659 (NSNQNNSNCSSPS) has biased composition (low complexity). Over residues 660 to 689 (RMSDSVSLNTDSSQDTSLCSPVKQTPVDSN) the composition is skewed to polar residues. Serine 712, serine 849, serine 854, and serine 869 each carry phosphoserine. The segment at 824 to 864 (EDTAPSPGRVEPQKASSSADVGISKSTEDLSPQRSGPTGAV) is disordered. Threonine 914 is subject to Phosphothreonine. The residue at position 917 (tyrosine 917) is a Phosphotyrosine. A Phosphoserine modification is found at serine 928. Tyrosine 970 is subject to Phosphotyrosine. Disordered regions lie at residues 990–1018 (WHPK…ENHS) and 1070–1093 (TTIQ…TRRT). Residues 1070 to 1084 (TTIQRQSSVSSTASV) are compositionally biased toward polar residues. Position 1097 is a phosphotyrosine (tyrosine 1097). Disordered stretches follow at residues 1107 to 1187 (GRTP…VPHD), 1198 to 1217 (AKKL…CQDD), and 1222 to 1274 (EEQN…VARH). Composition is skewed to polar residues over residues 1128-1139 (GPNTSRPQSARP) and 1149-1164 (MSVS…PSKR). Residues serine 1150 and serine 1171 each carry the phosphoserine modification. Phosphoserine is present on residues leucine 1231, arginine 1234, and serine 1276. In terms of domain architecture, PDZ spans 1311 to 1400 (EIRVRVEKDP…AVDLIIVREV (90 aa)).

This sequence belongs to the LAP (LRR and PDZ) protein family. As to quaternary structure, interacts with ERBB2, BPAG1 and ITGB4. May favor the localization of ERBB2, by restricting its presence to the basolateral membrane of epithelial cells. Also found to interact with ARVCF and delta catenin. Interacts (via C-terminus) with DST (via N-terminus). Interacts with NOD2 (via CARD domain). Post-translationally, isoform 2 is phosphorylated on Ser-1231 and Ser-1234.

Its subcellular location is the cell junction. It is found in the hemidesmosome. The protein localises to the nucleus membrane. It localises to the basolateral cell membrane. In terms of biological role, acts as an adapter for the receptor ERBB2, in epithelia. By binding the unphosphorylated ERBB2 'Tyr-1248' receptor, it may contribute to stabilize this unphosphorylated state. Inhibits NOD2-dependent NF-kappa-B signaling and pro-inflammatory cytokine secretion. This Mus musculus (Mouse) protein is Erbin.